We begin with the raw amino-acid sequence, 470 residues long: Myricetin 3-O-rhamnoside 1,2-glucosyltransferase UGT709G2 (470 aa).

His-20 (proton acceptor) is an active-site residue. His-20 provides a ligand contact to an anthocyanidin. The Charge relay role is filled by Asp-117. Residues Ala-340, Gln-342, His-357, Trp-360, Asn-361, Ser-362, and Glu-365 each coordinate UDP-alpha-D-glucose. Ala-380 lines the an anthocyanidin pocket. Positions 381 and 382 each coordinate UDP-alpha-D-glucose.

This sequence belongs to the UDP-glycosyltransferase family. As to expression, expressed in young cromes.

It catalyses the reaction myricetin 3-O-alpha-L-rhamnoside + UDP-alpha-D-glucose = myricetin 3-O-[beta-D-glucosyl-(1-&gt;2)-alpha-L-rhamnoside] + UDP + H(+). Its pathway is flavonoid metabolism. Glucosyltransferase involved in montbretin A (MbA) biosynthesis. Catalyzes the glucosylation of myricetin 3-O-alpha-L-rhamnoside (MR) to produce myricetin 3-O-[beta-D-glucosyl-(1-&gt;2)-alpha-L-rhamnoside] (MRG), a precursor of MbA. MbA is a potent inhibitor of human pancreatic alpha-amylase and is being developed as drug candidate to treat type-2 diabetes. In vitro, is able to transfer UDP-xylose with 50-fold less efficiency compared with UDP-glucose. In vitro, can use myricetin 3-O-glucoside and quercetin 3-O-glucoside as substrates, although these two flavonoids may not be physiological substrates in vivo. This is Myricetin 3-O-rhamnoside 1,2-glucosyltransferase UGT709G2 from Crocosmia x crocosmiiflora (Montbretia).